Consider the following 448-residue polypeptide: Homogentisate 1,2-dioxygenase (448 aa).

The active-site Proton acceptor is His303. Fe cation-binding residues include His346 and Glu352. The homogentisate site is built by Tyr361 and His382. Fe cation is bound at residue His382.

Belongs to the homogentisate dioxygenase family. As to quaternary structure, hexamer; dimer of trimers. Fe cation serves as cofactor.

The catalysed reaction is homogentisate + O2 = 4-maleylacetoacetate + H(+). It participates in amino-acid degradation; L-phenylalanine degradation; acetoacetate and fumarate from L-phenylalanine: step 4/6. Functionally, involved in the catabolism of homogentisate (2,5-dihydroxyphenylacetate or 2,5-OH-PhAc), a central intermediate in the degradation of phenylalanine and tyrosine. Catalyzes the oxidative ring cleavage of the aromatic ring of homogentisate to yield maleylacetoacetate. The sequence is that of Homogentisate 1,2-dioxygenase from Rhodopseudomonas palustris (strain BisB18).